Here is a 96-residue protein sequence, read N- to C-terminus: Co-chaperonin GroES (96 aa).

It belongs to the GroES chaperonin family. In terms of assembly, heptamer of 7 subunits arranged in a ring. Interacts with the chaperonin GroEL.

The protein resides in the cytoplasm. Together with the chaperonin GroEL, plays an essential role in assisting protein folding. The GroEL-GroES system forms a nano-cage that allows encapsulation of the non-native substrate proteins and provides a physical environment optimized to promote and accelerate protein folding. GroES binds to the apical surface of the GroEL ring, thereby capping the opening of the GroEL channel. The chain is Co-chaperonin GroES from Leptospira interrogans serogroup Icterohaemorrhagiae serovar copenhageni (strain Fiocruz L1-130).